Here is a 384-residue protein sequence, read N- to C-terminus: MKPQTKLSENSSRCEKVLYSEVITQLIYFLTSKKITNLGKIRLVKSIRDSFLSQLENILCFFLVYRTTYSFGVCLMKRFLFNKFFNRHPFTRVKSCFSSSSPSKFSFTQWLVGFTDGDGCFSISKQKIKNGKNKWSLTFKLTQNLYNYRILYFIKRNLGIGSLYKESSTNTVIYRLRRREHLKKIIDIFDQFPLLTKKYWDYYLFKKAFLILEDANLNSFEKNSKLEEIRIEKKSLKQYSPVNLEKYLTKSWLIGFIEAEGSFYLLQKSPVRIIHGFEITQNYEQPLLAQISEFLFNSQISPKIKSKKNSLITNYSLSTSSKERMLFLSSYFENCFKGVKSLEFKIWSRSLRKNYNFEQLLRARDLIRKLKNKYSRGSQHPKDK.

It belongs to the LAGLIDADG endonuclease family.

The protein resides in the mitochondrion. Probable mitochondrial DNA endonuclease involved in intron homing. In Schizosaccharomyces pombe (strain 972 / ATCC 24843) (Fission yeast), this protein is Probable intron-encoded endonuclease Cox1-I1b (cox1-I1b).